Consider the following 265-residue polypeptide: 3-methyl-2-oxobutanoate hydroxymethyltransferase (265 aa).

D44 and D83 together coordinate Mg(2+). Residues 44-45 (DS), D83, and K113 contribute to the 3-methyl-2-oxobutanoate site. Residue E115 participates in Mg(2+) binding. The active-site Proton acceptor is E183.

It belongs to the PanB family. As to quaternary structure, homodecamer; pentamer of dimers. It depends on Mg(2+) as a cofactor.

The protein resides in the cytoplasm. The catalysed reaction is 3-methyl-2-oxobutanoate + (6R)-5,10-methylene-5,6,7,8-tetrahydrofolate + H2O = 2-dehydropantoate + (6S)-5,6,7,8-tetrahydrofolate. The protein operates within cofactor biosynthesis; (R)-pantothenate biosynthesis; (R)-pantoate from 3-methyl-2-oxobutanoate: step 1/2. Functionally, catalyzes the reversible reaction in which hydroxymethyl group from 5,10-methylenetetrahydrofolate is transferred onto alpha-ketoisovalerate to form ketopantoate. The chain is 3-methyl-2-oxobutanoate hydroxymethyltransferase from Leptospira borgpetersenii serovar Hardjo-bovis (strain L550).